We begin with the raw amino-acid sequence, 309 residues long: DDRGK domain-containing protein 1 (309 aa).

At 1–2 the chain is on the lumenal side; sequence MD. Residues 3-23 traverse the membrane as a helical segment; that stretch reads LIILVGIAVALLVVIVTLYLL. Residues 24-309 are Cytoplasmic-facing; that stretch reads QKKNAAPETK…ISAGGGEASS (286 aa). Disordered stretches follow at residues 32 to 53 and 79 to 175; these read TKVAAAPQRGVPQRAQEGVPRR and ALPA…KEER. The span at 87–96 shows a compositional bias: acidic residues; that stretch reads DHEDEGQVDG. Over residues 107–175 the composition is skewed to basic and acidic residues; it reads LDEKMGAKKR…DAERLAKEER (69 aa). A coiled-coil region spans residues 120–177; sequence EAKEQKRLQREQELHDREQRKVKEAKEEAERKQQEDLEAEAERKRVDAERLAKEERER.

It belongs to the DDRGK1 family. Interacts with Atg9; the interaction is transient.

It localises to the endoplasmic reticulum membrane. Functionally, substrate adapter for ufmylation, the covalent attachment of the ubiquitin-like modifier UFM1 to substrate proteins. Required for ufmylation of Atg9; protects the nervous system during aging, possibly by stabilizing Atg9 and supporting its function. The sequence is that of DDRGK domain-containing protein 1 from Drosophila melanogaster (Fruit fly).